A 478-amino-acid polypeptide reads, in one-letter code: UDP-glycosyltransferase 90A1 (478 aa).

UDP-alpha-D-glucose is bound by residues T289, 343–345 (VDQ), 360–368 (HCGWNSAQE), and 382–385 (MAEQ).

The protein belongs to the UDP-glycosyltransferase family.

The sequence is that of UDP-glycosyltransferase 90A1 (UGT90A1) from Arabidopsis thaliana (Mouse-ear cress).